Consider the following 367-residue polypeptide: Putative 12-oxophytodienoate reductase 11 (367 aa).

FMN contacts are provided by residues P26–T28, A59, and Q101. H178–H181 lines the substrate pocket. Y183 acts as the Proton donor in catalysis. R230 is a binding site for FMN. Residue R270 participates in substrate binding. FMN-binding positions include G300 and G321 to R322.

This sequence belongs to the NADH:flavin oxidoreductase/NADH oxidase family. FMN serves as cofactor.

In terms of biological role, putative oxophytodienoate reductase that may be involved in the biosynthesis or metabolism of oxylipin signaling molecules. The sequence is that of Putative 12-oxophytodienoate reductase 11 (OPR11) from Oryza sativa subsp. japonica (Rice).